The primary structure comprises 361 residues: Phosphoserine aminotransferase (361 aa).

An L-glutamate-binding site is contributed by R42. Pyridoxal 5'-phosphate is bound by residues 76–77, W102, T152, D172, and Q195; that span reads AT. An N6-(pyridoxal phosphate)lysine modification is found at K196. 237 to 238 contributes to the pyridoxal 5'-phosphate binding site; it reads NT.

It belongs to the class-V pyridoxal-phosphate-dependent aminotransferase family. SerC subfamily. In terms of assembly, homodimer. It depends on pyridoxal 5'-phosphate as a cofactor.

The protein resides in the cytoplasm. It carries out the reaction O-phospho-L-serine + 2-oxoglutarate = 3-phosphooxypyruvate + L-glutamate. The enzyme catalyses 4-(phosphooxy)-L-threonine + 2-oxoglutarate = (R)-3-hydroxy-2-oxo-4-phosphooxybutanoate + L-glutamate. It functions in the pathway amino-acid biosynthesis; L-serine biosynthesis; L-serine from 3-phospho-D-glycerate: step 2/3. Its pathway is cofactor biosynthesis; pyridoxine 5'-phosphate biosynthesis; pyridoxine 5'-phosphate from D-erythrose 4-phosphate: step 3/5. Its function is as follows. Catalyzes the reversible conversion of 3-phosphohydroxypyruvate to phosphoserine and of 3-hydroxy-2-oxo-4-phosphonooxybutanoate to phosphohydroxythreonine. The chain is Phosphoserine aminotransferase from Xanthomonas campestris pv. campestris (strain 8004).